A 233-amino-acid chain; its full sequence is uncharacterized protein (233 aa).

A run of 3 helical transmembrane segments spans residues 78 to 98 (FCLI…PVMY), 113 to 133 (FITC…LFKL), and 188 to 208 (FLLI…YGTI).

The protein localises to the membrane. This is an uncharacterized protein from Saccharomyces cerevisiae (strain ATCC 204508 / S288c) (Baker's yeast).